The chain runs to 289 residues: ATP synthase gamma chain (289 aa).

Belongs to the ATPase gamma chain family. F-type ATPases have 2 components, CF(1) - the catalytic core - and CF(0) - the membrane proton channel. CF(1) has five subunits: alpha(3), beta(3), gamma(1), delta(1), epsilon(1). CF(0) has three main subunits: a, b and c.

The protein localises to the cell inner membrane. Its function is as follows. Produces ATP from ADP in the presence of a proton gradient across the membrane. The gamma chain is believed to be important in regulating ATPase activity and the flow of protons through the CF(0) complex. The protein is ATP synthase gamma chain of Phocaeicola vulgatus (strain ATCC 8482 / DSM 1447 / JCM 5826 / CCUG 4940 / NBRC 14291 / NCTC 11154) (Bacteroides vulgatus).